The sequence spans 347 residues: Protein-glutamate methylesterase/protein-glutamine glutaminase 2 (347 aa).

The Response regulatory domain occupies 2–119 (RVMIVDDSAV…LGGADLYRKD (118 aa)). Residue D52 is modified to 4-aspartylphosphate. The tract at residues 131–153 (AARPAPPQAAPRPTLAPPSSDPA) is disordered. The span at 134–150 (PAPPQAAPRPTLAPPSS) shows a compositional bias: pro residues. Residues 152 to 346 (PAGPIEAVVV…PYIASRARSV (195 aa)) form the CheB-type methylesterase domain. Residues S164, H191, and D288 contribute to the active site.

This sequence belongs to the CheB family. Post-translationally, phosphorylated by CheA. Phosphorylation of the N-terminal regulatory domain activates the methylesterase activity.

The protein localises to the cytoplasm. The catalysed reaction is [protein]-L-glutamate 5-O-methyl ester + H2O = L-glutamyl-[protein] + methanol + H(+). It catalyses the reaction L-glutaminyl-[protein] + H2O = L-glutamyl-[protein] + NH4(+). In terms of biological role, involved in chemotaxis. Part of a chemotaxis signal transduction system that modulates chemotaxis in response to various stimuli. Catalyzes the demethylation of specific methylglutamate residues introduced into the chemoreceptors (methyl-accepting chemotaxis proteins or MCP) by CheR. Also mediates the irreversible deamidation of specific glutamine residues to glutamic acid. The sequence is that of Protein-glutamate methylesterase/protein-glutamine glutaminase 2 from Caulobacter vibrioides (strain ATCC 19089 / CIP 103742 / CB 15) (Caulobacter crescentus).